A 62-amino-acid polypeptide reads, in one-letter code: Large ribosomal subunit protein bL28 (62 aa).

The protein belongs to the bacterial ribosomal protein bL28 family.

This chain is Large ribosomal subunit protein bL28, found in Streptococcus equi subsp. equi (strain 4047).